A 105-amino-acid chain; its full sequence is Probable molt-inhibiting hormone (105 aa).

The first 28 residues, 1-28 (MYRMPMRFWLTAVVMVVVGALLLDTASA), serve as a signal peptide directing secretion. 3 disulfides stabilise this stretch: C35–C72, C52–C68, and C55–C81.

This sequence belongs to the arthropod CHH/MIH/GIH/VIH hormone family. As to expression, expressed in the postmolt, intermolt, and premolt stages of the shrimp eyestalks and the brain.

The protein resides in the secreted. Its function is as follows. Inhibits Y-organs where molting hormone (ecdysteroid) is secreted. A molting cycle is initiated when MIH secretion diminishes or stops. The protein is Probable molt-inhibiting hormone of Metapenaeus ensis (Greasyback shrimp).